Consider the following 2216-residue polypeptide: RNA-directed RNA polymerase L (2216 aa).

The tract at residues 26–289 is endonuclease; the sequence is KTSFLSQVNL…ETRTAMLDER (264 aa). 3 residues coordinate Mn(2+): Glu-51, Asp-88, and Glu-101. The active site involves Lys-114. The 198-residue stretch at 1167-1364 folds into the RdRp catalytic domain; it reads LDMKCVVRLS…YLSSKFNKFV (198 aa). Asp-1323 is a binding site for Mg(2+).

It belongs to the Bunyavirales RNA polymerase family. Homomultimer; the oligomeric structure is essential for the polymerase activity. Interacts with nucleoprotein N. Interacts with protein Z; this interaction inhibits viral transcription and replication, Z partially blocks the product exit tunnel for the releasing nascent RNA product. Mn(2+) serves as cofactor. Requires Mg(2+) as cofactor.

The protein localises to the virion. It localises to the host cytoplasm. It catalyses the reaction RNA(n) + a ribonucleoside 5'-triphosphate = RNA(n+1) + diphosphate. In terms of biological role, RNA-dependent RNA polymerase, which is responsible for the replication and transcription of the viral RNA genome using antigenomic RNA as an intermediate. During transcription, synthesizes subgenomic RNAs and assures their capping by a cap-snatching mechanism, which involves the endonuclease activity cleaving the host capped pre-mRNAs. These short capped RNAs are then used as primers for viral transcription. The 3'-end of subgenomic mRNAs molecules are heterogeneous and not polyadenylated. The replicase function is to direct synthesis of antigenomic and genomic RNA which are encapsidated and non capped. As a consequence of the use of the same enzyme for both transcription and replication, these mechanisms need to be well coordinated. These processes may be regulated by proteins N and Z in a dose-dependent manner. Z protein inhibits the viral polymerase L und thus the viral transcription and RNA synthesis. In Bear Canyon mammarenavirus (isolate Mouse/United States/AV A0070039/2000) (BCNV), this protein is RNA-directed RNA polymerase L.